Here is a 1437-residue protein sequence, read N- to C-terminus: IQ domain-containing protein N (1437 aa).

One can recognise an IQ 1 domain in the interval 84 to 112 (SRAATVIQASWKGYRLRQKLISQMTAAKA). Disordered regions lie at residues 332–353 (TSPT…SLSN), 416–440 (SQAQ…KPSP), and 848–878 (STGS…QNPR). Over residues 422–440 (TVSTSSKTSPSSPTVKPSP) the composition is skewed to low complexity. Residues 861-878 (AQPQLHSHAPNKTMQNPR) show a composition bias toward polar residues. IQ domains are found at residues 1190-1216 (QAVV…QWAT), 1217-1239 (IIQA…RATT), 1240-1258 (IIQA…ARQV), 1361-1389 (QHRA…SAAK), and 1390-1413 (MVQA…LGTG).

In terms of assembly, interacts with calmodulin. In terms of tissue distribution, expressed in testis, in elongating spermatids (at protein level).

Its function is as follows. Essential for spermiogenesis and fertilization. May be required for manchette assembly in elongating spermatids. The sequence is that of IQ domain-containing protein N (Iqcn) from Mus musculus (Mouse).